Consider the following 488-residue polypeptide: ATP synthase subunit beta, chloroplastic (488 aa).

An ATP-binding site is contributed by 170 to 177 (GGAGVGKT).

This sequence belongs to the ATPase alpha/beta chains family. In terms of assembly, F-type ATPases have 2 components, CF(1) - the catalytic core - and CF(0) - the membrane proton channel. CF(1) has five subunits: alpha(3), beta(3), gamma(1), delta(1), epsilon(1). CF(0) has four main subunits: a(1), b(1), b'(1) and c(9-12).

It localises to the plastid. The protein localises to the chloroplast thylakoid membrane. The enzyme catalyses ATP + H2O + 4 H(+)(in) = ADP + phosphate + 5 H(+)(out). Functionally, produces ATP from ADP in the presence of a proton gradient across the membrane. The catalytic sites are hosted primarily by the beta subunits. The sequence is that of ATP synthase subunit beta, chloroplastic from Picea abies (Norway spruce).